A 303-amino-acid polypeptide reads, in one-letter code: UDP-N-acetylenolpyruvoylglucosamine reductase (303 aa).

The 181-residue stretch at 32–212 (IGGKADLFLN…EQETKEYLAK (181 aa)) folds into the FAD-binding PCMH-type domain. Residue R176 is part of the active site. S226 (proton donor) is an active-site residue. E296 is a catalytic residue.

It belongs to the MurB family. Requires FAD as cofactor.

Its subcellular location is the cytoplasm. The catalysed reaction is UDP-N-acetyl-alpha-D-muramate + NADP(+) = UDP-N-acetyl-3-O-(1-carboxyvinyl)-alpha-D-glucosamine + NADPH + H(+). Its pathway is cell wall biogenesis; peptidoglycan biosynthesis. Functionally, cell wall formation. This Desulforamulus reducens (strain ATCC BAA-1160 / DSM 100696 / MI-1) (Desulfotomaculum reducens) protein is UDP-N-acetylenolpyruvoylglucosamine reductase.